The sequence spans 167 residues: UPF0179 protein PAE0681 (167 aa).

Residues 142–167 (PSPSGSSISATSQGPSRAPPSRRLLK) form a disordered region. The segment covering 145–157 (SGSSISATSQGPS) has biased composition (low complexity).

The protein belongs to the UPF0179 family.

In Pyrobaculum aerophilum (strain ATCC 51768 / DSM 7523 / JCM 9630 / CIP 104966 / NBRC 100827 / IM2), this protein is UPF0179 protein PAE0681.